The chain runs to 252 residues: Ribosomal RNA small subunit methyltransferase J (252 aa).

Residues 104 to 105, 120 to 121, 156 to 157, and D174 each bind S-adenosyl-L-methionine; these read RD, ER, and SS.

It belongs to the methyltransferase superfamily. RsmJ family.

It localises to the cytoplasm. It catalyses the reaction guanosine(1516) in 16S rRNA + S-adenosyl-L-methionine = N(2)-methylguanosine(1516) in 16S rRNA + S-adenosyl-L-homocysteine + H(+). Functionally, specifically methylates the guanosine in position 1516 of 16S rRNA. The protein is Ribosomal RNA small subunit methyltransferase J of Yersinia enterocolitica serotype O:8 / biotype 1B (strain NCTC 13174 / 8081).